The sequence spans 215 residues: Large ribosomal subunit protein uL3 (215 aa).

Residues Lys124 to Arg164 form a disordered region.

Belongs to the universal ribosomal protein uL3 family. In terms of assembly, part of the 50S ribosomal subunit. Forms a cluster with proteins L14 and L19.

One of the primary rRNA binding proteins, it binds directly near the 3'-end of the 23S rRNA, where it nucleates assembly of the 50S subunit. This chain is Large ribosomal subunit protein uL3, found in Synechococcus sp. (strain RCC307).